The primary structure comprises 67 residues: Cysteine-rich venom protein bucarin (67 aa).

In terms of domain architecture, SCP spans 13–58 (VDKHNALRRSVRPTARNMLQMEWNSNAAQNAKRFADRCTFAHSPPH).

It belongs to the CRISP family. Post-translationally, contains 8 disulfide bonds. Expressed by the venom gland.

The protein localises to the secreted. Blocks contraction of smooth muscle elicited by high potassium-induced depolarization, but does not block caffeine-stimulated contraction. May target voltage-gated calcium channels on smooth muscle. The protein is Cysteine-rich venom protein bucarin of Bungarus candidus (Malayan krait).